The sequence spans 228 residues: MPPHFIDGEPHDHHHDRPRRVRVAGEPVRIGIGGPVGSGKTALVAALCRQLREELSLAVLTNDIYTTEDADFLRRHAVLPDERIAAVQTGGCPHTAIRDDITANLDAIDDLIAANPPLDLILVESGGDNLTATFSSGLIDVQIFVVDVAGGDKVPRKGGPGVTFSDLLVINKTDLAPMVGADLAVMRRDAEQVREGRPTALISLTEDPSSGPALAWVREQVRILADVH.

Position 34–41 (34–41 (GPVGSGKT)) interacts with GTP.

This sequence belongs to the SIMIBI class G3E GTPase family. UreG subfamily. Homodimer. UreD, UreF and UreG form a complex that acts as a GTP-hydrolysis-dependent molecular chaperone, activating the urease apoprotein by helping to assemble the nickel containing metallocenter of UreC. The UreE protein probably delivers the nickel.

It is found in the cytoplasm. Functionally, facilitates the functional incorporation of the urease nickel metallocenter. This process requires GTP hydrolysis, probably effectuated by UreG. The chain is Urease accessory protein UreG from Rhodococcus opacus (strain B4).